The sequence spans 544 residues: Serine/threonine-protein kinase bur1 (544 aa).

The Protein kinase domain maps to 25–326 (FEFLGKLGEG…AIDALKHPYF (302 aa)). Residues 31-39 (LGEGTFGEV) and K54 each bind ATP. The active-site Proton acceptor is D155. The segment at 357–544 (AAMPPAPAGG…ERVDRGPYRR (188 aa)) is disordered. Polar residues predominate over residues 374 to 403 (GGWSTNSGSRTGAETRNPRISSAARSQGNQ). Basic and acidic residues-rich tracts occupy residues 419 to 438 (RGNE…HRDG), 456 to 466 (HSDKTGRDRGY), 488 to 511 (DRNR…DKSH), and 532 to 544 (NYRE…PYRR).

It belongs to the protein kinase superfamily. CMGC Ser/Thr protein kinase family. CDC2/CDKX subfamily.

The protein localises to the nucleus. It catalyses the reaction L-seryl-[protein] + ATP = O-phospho-L-seryl-[protein] + ADP + H(+). It carries out the reaction L-threonyl-[protein] + ATP = O-phospho-L-threonyl-[protein] + ADP + H(+). The enzyme catalyses [DNA-directed RNA polymerase] + ATP = phospho-[DNA-directed RNA polymerase] + ADP + H(+). Its function is as follows. Serine/threonine-protein kinase involved in transcription regulation. Phosphorylates the UBC2/RAD6 ubiquitin-conjugating enzyme (E2), leading to monoubiquitination of histone H2B and the silencing of telomeric-associated genes. Also required for histone H3 methylation. Necessary for the recovery from pheromone-induced growth arrest in the cell cycle G1 phase. The polypeptide is Serine/threonine-protein kinase bur1 (ptkA) (Emericella nidulans (strain FGSC A4 / ATCC 38163 / CBS 112.46 / NRRL 194 / M139) (Aspergillus nidulans)).